The chain runs to 70 residues: Melittin (70 aa).

Positions 1 to 21 (MKFLVNVALVFMVVYISFIYA) are cleaved as a signal peptide. Residues 22–43 (APEPEPAPEAEAEADAEADPEA) constitute a propeptide, removed by a dipeptidylpeptidase. Gly-44 carries the N-formylglycine; partial modification. Gln-69 carries the post-translational modification Glutamine amide.

Belongs to the melittin family. Monomer (in solution and for integration into membranes), homotetramer (in solution and potentially as a toroidal pore in membranes), and potenially homomultimer (as a toroidal pore in membranes). Expressed by the venom gland.

The protein localises to the secreted. Its subcellular location is the target cell membrane. In terms of biological role, main toxin of bee venom with strong hemolytic activity and antimicrobial activity. It has enhancing effects on bee venom phospholipase A2 activity. This amphipathic toxin binds to negatively charged membrane surface and forms pore by inserting into lipid bilayers inducing the leakage of ions and molecules and the enhancement of permeability that ultimately leads to cell lysis. It acts as a voltage-gated pore with higher selectivity for anions over cations. The ion conductance has been shown to be voltage-dependent. Self-association of melittin in membranes is promoted by high ionic strength, but not by the presence of negatively charged lipids. In vivo, intradermal injection into healthy human volunteers produce sharp pain sensation and an inflammatory response. It produces pain by activating primary nociceptor cells directly and indirectly due to its ability to activate plasma membrane phospholipase A2 and its pore-forming activity. The protein is Melittin (MELT) of Polistes hebraeus (Paper wasp).